Reading from the N-terminus, the 337-residue chain is Ribosomal RNA small subunit methyltransferase C (337 aa).

This sequence belongs to the methyltransferase superfamily. RsmC family. As to quaternary structure, monomer.

The protein localises to the cytoplasm. It catalyses the reaction guanosine(1207) in 16S rRNA + S-adenosyl-L-methionine = N(2)-methylguanosine(1207) in 16S rRNA + S-adenosyl-L-homocysteine + H(+). In terms of biological role, specifically methylates the guanine in position 1207 of 16S rRNA in the 30S particle. This chain is Ribosomal RNA small subunit methyltransferase C, found in Acinetobacter baumannii (strain ATCC 17978 / DSM 105126 / CIP 53.77 / LMG 1025 / NCDC KC755 / 5377).